We begin with the raw amino-acid sequence, 486 residues long: Cardiolipin synthase A (486 aa).

Helical transmembrane passes span 3–23 (IFYN…IANI) and 38–58 (MSWL…WFFF). PLD phosphodiesterase domains follow at residues 219-246 (VDVR…VDPY) and 399-426 (QKGL…DMRS). Residues H224, K226, D231, H404, K406, and D411 contribute to the active site.

This sequence belongs to the phospholipase D family. Cardiolipin synthase subfamily. ClsA sub-subfamily.

It localises to the cell inner membrane. The enzyme catalyses 2 a 1,2-diacyl-sn-glycero-3-phospho-(1'-sn-glycerol) = a cardiolipin + glycerol. Functionally, catalyzes the reversible phosphatidyl group transfer from one phosphatidylglycerol molecule to another to form cardiolipin (CL) (diphosphatidylglycerol) and glycerol. In Buchnera aphidicola subsp. Acyrthosiphon pisum (strain APS) (Acyrthosiphon pisum symbiotic bacterium), this protein is Cardiolipin synthase A.